A 375-amino-acid polypeptide reads, in one-letter code: Alcohol dehydrogenase 1 (375 aa).

Residue Ser-2 is modified to N-acetylserine. Positions 47, 68, 98, 101, 104, 112, and 175 each coordinate Zn(2+). Residues 200-205 (GLGGVG), Asp-224, Lys-229, 293-295 (LGV), and Arg-370 each bind NAD(+).

Belongs to the zinc-containing alcohol dehydrogenase family. Class-I subfamily. As to quaternary structure, homodimer. Requires Zn(2+) as cofactor.

Its subcellular location is the cytoplasm. It carries out the reaction a primary alcohol + NAD(+) = an aldehyde + NADH + H(+). It catalyses the reaction a secondary alcohol + NAD(+) = a ketone + NADH + H(+). The sequence is that of Alcohol dehydrogenase 1 (ADH1) from Apteryx australis (Southern brown kiwi).